Consider the following 585-residue polypeptide: Arginine--tRNA ligase (585 aa).

The short motif at 131–141 (ANPTGPMHVGH) is the 'HIGH' region element.

Belongs to the class-I aminoacyl-tRNA synthetase family. As to quaternary structure, monomer.

It localises to the cytoplasm. The catalysed reaction is tRNA(Arg) + L-arginine + ATP = L-arginyl-tRNA(Arg) + AMP + diphosphate. The chain is Arginine--tRNA ligase from Brucella abortus (strain S19).